The following is a 91-amino-acid chain: Small ribosomal subunit protein uS19 (91 aa).

Belongs to the universal ribosomal protein uS19 family.

Protein S19 forms a complex with S13 that binds strongly to the 16S ribosomal RNA. The sequence is that of Small ribosomal subunit protein uS19 from Metamycoplasma arthritidis (strain 158L3-1) (Mycoplasma arthritidis).